The primary structure comprises 220 residues: Meiotic nuclear division protein 1 homolog (220 aa).

A coiled-coil region spans residues 76 to 147 (SKALHARKRR…KVEIEKYQEC (72 aa)).

Belongs to the MND1 family.

It localises to the nucleus. Functionally, required for proper homologous chromosome pairing and efficient cross-over and intragenic recombination during meiosis. Stimulates both DMC1- and RAD51-mediated homologous strand assimilation, which is required for the resolution of meiotic double-strand breaks. The protein is Meiotic nuclear division protein 1 homolog of Danio rerio (Zebrafish).